The following is a 381-amino-acid chain: Homoserine O-succinyltransferase (381 aa).

Positions 45–360 constitute an AB hydrolase-1 domain; the sequence is NAVLVCHALN…PHGHDAFLLD (316 aa). The Nucleophile role is filled by Ser-151. Arg-221 is a binding site for substrate. Active-site residues include Asp-321 and His-354. Asp-355 contacts substrate.

Belongs to the AB hydrolase superfamily. MetX family. Homodimer.

It is found in the cytoplasm. The catalysed reaction is L-homoserine + succinyl-CoA = O-succinyl-L-homoserine + CoA. The protein operates within amino-acid biosynthesis; L-methionine biosynthesis via de novo pathway; O-succinyl-L-homoserine from L-homoserine: step 1/1. Its function is as follows. Transfers a succinyl group from succinyl-CoA to L-homoserine, forming succinyl-L-homoserine. The protein is Homoserine O-succinyltransferase of Burkholderia multivorans (strain ATCC 17616 / 249).